The primary structure comprises 864 residues: MADRVDWLQSQSGVCKVGVYSPGDNQHQDWKMDTSTDPVRVLSWLRKDLEKSTAGFQDSRFKPGESSFVEEVAYPVDQRKGFCVDYYNTTNKGSPGRLHFEMSHKENPSQGLISHVGNGGSIDEVSFYANRLTNLVIAMARKEINEKIHGAENKCVHQSLYMGDEPTPHKSLSTVASELVNETVTACSKNISSDKAPGSGDRASGSSQAPGLRYTSTLKIKESTKEGKCPDDKPGTKKSFFYKEVFESRNAGDAKEGGRSLPGDQKLFRTSPDNRPDDFSNSISQGIMTYANSVVSDMMVSIMKTLKIQVKDTTIATILLKKVLMKHAKEVVSDLIDSFMKNLHGVTGSLMTDTDFVSAVKRSFFSHGSQKATDIMDAMLGKLYNVMFAKKFPENIRRARDKSESYSLISTKSRAGDPKLSNLNFAMKSESKLKENLFSTCKLEKEKTCAETLGEHIIKEGLHMWHKSQQKSPGLERAAKLGNAPQEVSFECPDPCEANPPHQPQPPENFANFMCDSDSWAKDLIVSALLLIQYHLAQGGKMDAQSFLEAAASTNFPTNKPPPPSPVVQDECKLKSPPHKICDQEQTEKKDLMSVIFNFIRNLLSETIFKSSRNCESNVHEQNTQEEEIHPCERPKTPCERPITPPAPKFCEDEEATGGALSGLTKMVANQLDNCMNGQMVEHLMDSVMKLCLIIAKSCDSPLSELGEEKCGDASRPNSAFPDNLYECLPVKGTGTAEALLQNAYLTIHNELRGLSGQPPEGCEIPKVIVSNHNLADTVQNKQLQAVLQWVAASELNVPILYFAGDDEGIQEKLLQLSATAVEKGRSVGEVLQSVLRYEKERQLDEAVGNVTRLQLLDWLMANL.

Serine 12 is modified (phosphoserine; by STK33). The segment at 125 to 138 is PKA-RII subunit binding domain; the sequence is VSFYANRLTNLVIA. Disordered regions lie at residues 190–235 and 251–281; these read NISS…DKPG and AGDAKEGGRSLPGDQKLFRTSPDNRPDDFSN. Over residues 204–218 the composition is skewed to polar residues; sequence SGSSQAPGLRYTSTL. At serine 206 the chain carries Phosphoserine. A compositionally biased stretch (basic and acidic residues) spans 219–235; it reads KIKESTKEGKCPDDKPG. Serine 405 is subject to Phosphoserine. Tyrosine 406 is modified (phosphotyrosine). Residues 619 to 638 form a disordered region; sequence VHEQNTQEEEIHPCERPKTP. Over residues 627–638 the composition is skewed to basic and acidic residues; sequence EEIHPCERPKTP.

Belongs to the AKAP110 family. Interacts with ROPN1 and ROPN1L. Interacts with QRICH2. Post-translationally, phosphorylated by STK33 during sperm flagella assembly. Phosphorylated on tyrosine.

The protein resides in the cytoplasmic vesicle. It localises to the secretory vesicle. The protein localises to the acrosome. Its subcellular location is the cell projection. It is found in the cilium. The protein resides in the flagellum. In terms of biological role, structural component of sperm fibrous sheath. Required for the formation of the subcellular structure of the sperm flagellum, sperm motility and male fertility. The polypeptide is A-kinase anchor protein 3 (Mus musculus (Mouse)).